The sequence spans 284 residues: T-cell leukemia homeobox protein 2 (284 aa).

3 disordered regions span residues 1–50 (MEPG…NGAF), 78–106 (GGVI…GPSG), and 139–166 (FSGT…SFSR). Residues 30 to 50 (TPGGGLGLGRGGQGHGENGAF) show a composition bias toward gly residues. The span at 87 to 96 (RPLPVPPPAG) shows a compositional bias: pro residues. Positions 157–216 (RKKPRTSFSRSQVLELERRFLRQKYLASAERAALAKALRMTDAQVKTWFQNRRTKWRRQT) form a DNA-binding region, homeobox.

It localises to the nucleus. Functionally, transcription activator that binds DNA elements with the consensus sequence 5'-CGGTAATTGG-3'. Binds DNA via its homeobox. Required for normal cell death of enteric neurons in the gastrointestinal tract. Required for normal development of the enteric nervous system, and for proper development of normal motility of the gastrointestinal tract. This is T-cell leukemia homeobox protein 2 (TLX2) from Homo sapiens (Human).